Reading from the N-terminus, the 132-residue chain is MTMTDPIADMLTRIRNASAVKHDTVDVPASNMKKDIANILLNEGFIKGFDVIEDGKQGILRLQLKYGQSKERVITGIKRISKPGLKVYAKRDEIPRVLGGLGIAIISTSKGITTDKVARKEGVGGEVIAYIW.

The protein belongs to the universal ribosomal protein uS8 family. Part of the 30S ribosomal subunit. Contacts proteins S5 and S12.

One of the primary rRNA binding proteins, it binds directly to 16S rRNA central domain where it helps coordinate assembly of the platform of the 30S subunit. This chain is Small ribosomal subunit protein uS8, found in Alkaliphilus metalliredigens (strain QYMF).